The sequence spans 691 residues: Protein simr-1 (691 aa).

Residues 139–204 (EAEITPGTIY…TLFHLGKFTI (66 aa)) enclose the Tudor; degenerate domain. Disordered stretches follow at residues 547 to 573 (TGPC…DMSI) and 588 to 618 (DNLN…TTNS). Polar residues-rich tracts occupy residues 549–573 (PCGS…DMSI) and 588–598 (DNLNDTENWPN).

The protein localises to the cytoplasm. The protein resides in the perinuclear region. Functionally, acts downstream of piRNA production to promote mediator complex-dependent endogenous siRNA biogenesis from piRNA-target mRNAs in the RNA interference pathway in germ cells. Not required to identify target mRNA by the piRNA pathway. Plays a role in both spermatogenesis and oogenesis and in maintaining fertility over multiple generations, probably by directing mutator-dependent silencing to piRNA-targeted genes. This chain is Protein simr-1, found in Caenorhabditis elegans.